Consider the following 204-residue polypeptide: ATP synthase subunit 4, mitochondrial (204 aa).

Transmembrane regions (helical) follow at residues 27–47 and 52–72; these read GILA…LYVV and ILLV…APLY.

In terms of assembly, F-type ATP synthases have 2 components, the catalytic core F(1) and the membrane-embedded component F(0), linked together by a central stalk and a peripheral stalk. The central stalk, also called rotor shaft, is often seen as part of F(1). The peripheral stalk is seen as part of F(0). F(0) contains the membrane channel next to the rotor. F-type ATP synthases form dimers but each monomer functions independently in ATP generation. The dimer consists of 18 different polypeptides: ATP1 (subunit alpha, part of F(1), 3 molecules per monomer), ATP2 (subunit beta, part of F(1), 3 molecules per monomer), ATP3 (subunit gamma, part of the central stalk), ATP4 (subunit b, part of the peripheral stalk), ATP5/OSCP (subunit 5/OSCP, part of the peripheral stalk), ATP6 (subunit a, part of the peripheral stalk), ATP7 (subunit d, part of the peripheral stalk), ATP8 (subunit 8, part of the peripheral stalk), OLI1 (subunit c, part of the rotor, 10 molecules per monomer), ATP14 (subunit h, part of the peripheral stalk), ATP15 (subunit epsilon, part of the central stalk), ATP16 (subunit delta, part of the central stalk), ATP17 (subunit f, part of the peripheral stalk), ATP18 (subunit i/j, part of the peripheral stalk). Dimer-specific subunits are ATP19 (subunit k, at interface between monomers), ATP20 (subunit g, at interface between monomers), TIM11 (subunit e, at interface between monomers). Also contains subunit L.

It is found in the mitochondrion inner membrane. Its function is as follows. Mitochondrial membrane ATP synthase (F(1)F(0) ATP synthase or Complex V) produces ATP from ADP in the presence of a proton gradient across the membrane which is generated by electron transport complexes of the respiratory chain. F-type ATP synthases consist of two structural domains, F(1) - containing the extramembraneous catalytic core, and F(0) - containing the membrane proton channel, linked together by a central stalk and a peripheral stalk. During catalysis, ATP synthesis in the catalytic domain of F(1) is coupled via a rotary mechanism of the central stalk subunits to proton translocation. Part of the complex F(0) domain and the peripheral stalk, which acts as a stator to hold the catalytic alpha/ATP1(3)beta/ATP2(3) subcomplex and subunit a/ATP6 static relative to the rotary elements. This is ATP synthase subunit 4, mitochondrial from Pichia angusta (Yeast).